The primary structure comprises 420 residues: Replication factor C large subunit (420 aa).

Position 46-53 (46-53 (GVQGSGKT)) interacts with ATP.

This sequence belongs to the activator 1 small subunits family. RfcL subfamily. Heteromultimer composed of small subunits (RfcS) and large subunits (RfcL).

Part of the RFC clamp loader complex which loads the PCNA sliding clamp onto DNA. The protein is Replication factor C large subunit of Thermoplasma volcanium (strain ATCC 51530 / DSM 4299 / JCM 9571 / NBRC 15438 / GSS1).